Reading from the N-terminus, the 669-residue chain is NADH-ubiquinone oxidoreductase chain 5 (669 aa).

Helical transmembrane passes span 3–23 (LLIV…GRFL), 40–60 (SILS…CYLR), 76–96 (FLFD…SSLV), 113–133 (FMCY…GDNF), 136–156 (LFLG…FWFT), 217–237 (AISL…AQIG), 250–270 (TPVS…FMIA), 283–303 (LIVI…TGIL), 319–339 (LGYM…FHLM), 340–360 (NHAF…HAMS), 375–395 (FPLT…FPFL), 417–437 (NFAF…SFRL), 461–481 (IPMA…GYLA), and 619–639 (GFVY…VTFF).

The protein belongs to the complex I subunit 5 family. In terms of assembly, complex I is composed of at least 49 different subunits.

It localises to the mitochondrion inner membrane. The catalysed reaction is a ubiquinone + NADH + 5 H(+)(in) = a ubiquinol + NAD(+) + 4 H(+)(out). Core subunit of the mitochondrial membrane respiratory chain NADH dehydrogenase (Complex I) that is believed to belong to the minimal assembly required for catalysis. Complex I functions in the transfer of electrons from NADH to the respiratory chain. The immediate electron acceptor for the enzyme is believed to be ubiquinone. The sequence is that of NADH-ubiquinone oxidoreductase chain 5 (ND5) from Arabidopsis thaliana (Mouse-ear cress).